A 1081-amino-acid polypeptide reads, in one-letter code: Zinc finger protein 827 (1081 aa).

Residues 1–10 are compositionally biased toward basic and acidic residues; that stretch reads MPRRKQEQPK. The interval 1-14 is mediates direct interaction with RBBP4; sequence MPRRKQEQPKRLPS. The interval 1–77 is disordered; sequence MPRRKQEQPK…DTSLGSTTPS (77 aa). The RRK motif; mediates NuRD recruitment to telomeres signature appears at 3–5; sequence RRK. Over residues 62 to 77 the composition is skewed to polar residues; sequence EQSTSPDTSLGSTTPS. Residues Lys-176, Lys-216, and Lys-226 each participate in a glycyl lysine isopeptide (Lys-Gly) (interchain with G-Cter in SUMO2) cross-link. Disordered regions lie at residues 258–280 and 305–348; these read KKVS…SFLS and EKSS…SLEL. Pro residues predominate over residues 327 to 344; it reads VSPPPPPPPPPPPPPPPQ. Residues Lys-360 and Lys-372 each participate in a glycyl lysine isopeptide (Lys-Gly) (interchain with G-Cter in SUMO2) cross-link. 3 C2H2-type zinc fingers span residues 374–396, 402–424, and 433–455; these read FQCP…MVIH, HQCP…MKVH, and FQCQ…MRCH. Residues Lys-466, Lys-475, Lys-523, Lys-549, Lys-580, Lys-587, and Lys-597 each participate in a glycyl lysine isopeptide (Lys-Gly) (interchain with G-Cter in SUMO2) cross-link. Residues 525-553 are disordered; sequence EPKEDNGLPTSFTLNTADRPANHTKLKDP. The segment covering 616–627 has biased composition (polar residues); that stretch reads VFSPESEVSTPG. The interval 616-640 is disordered; it reads VFSPESEVSTPGVSEDALKPQEGKG. The span at 631 to 640 shows a compositional bias: basic and acidic residues; sequence DALKPQEGKG. Residues Lys-634, Lys-639, and Lys-658 each participate in a glycyl lysine isopeptide (Lys-Gly) (interchain with G-Cter in SUMO2) cross-link. Residue Lys-673 forms a Glycyl lysine isopeptide (Lys-Gly) (interchain with G-Cter in SUMO1); alternate linkage. Lys-673 is covalently cross-linked (Glycyl lysine isopeptide (Lys-Gly) (interchain with G-Cter in SUMO2); alternate). Glycyl lysine isopeptide (Lys-Gly) (interchain with G-Cter in SUMO2) cross-links involve residues Lys-704, Lys-710, Lys-742, Lys-778, and Lys-798. 2 consecutive C2H2-type zinc fingers follow at residues 817–839 and 845–867; these read FPCD…LSLH and YKCH…LTVH. Glycyl lysine isopeptide (Lys-Gly) (interchain with G-Cter in SUMO2) cross-links involve residues Lys-870 and Lys-891. C2H2-type zinc fingers lie at residues 897–919 and 929–952; these read YSCH…MSLH and ICCT…GTKH. Basic and acidic residues predominate over residues 947–960; that stretch reads HIGTKHTGEDRKTP. A disordered region spans residues 947 to 1013; it reads HIGTKHTGED…GSQPSLNSEE (67 aa). Lys-958 is covalently cross-linked (Glycyl lysine isopeptide (Lys-Gly) (interchain with G-Cter in SUMO2)). A compositionally biased stretch (low complexity) spans 961 to 978; sequence SESNSPSSSSLSALSDSA. Basic and acidic residues predominate over residues 979–988; it reads NSKDDSDGSQ. Lys-1014 participates in a covalent cross-link: Glycyl lysine isopeptide (Lys-Gly) (interchain with G-Cter in SUMO2). 2 C2H2-type zinc fingers span residues 1019-1041 and 1047-1069; these read FECV…LQIH and FECD…KKCH.

It belongs to the krueppel C2H2-type zinc-finger protein family. In terms of assembly, part of a transcription inhibitory ribonucleoprotein complex composed at least of the circular RNA circZNF827, HNRNPK and HNRNPL. Interacts with the nucleosome remodeling and histone deacetylase/NuRD complex. Interacts with RBBP4; the interaction is direct and recruits RBBP4, a component of the NuRD complex, to telomeres.

It is found in the nucleus. The protein localises to the chromosome. The protein resides in the telomere. As part of a ribonucleoprotein complex composed at least of HNRNPK, HNRNPL and the circular RNA circZNF827 that nucleates the complex on chromatin, may negatively regulate the transcription of genes involved in neuronal differentiation. Could also recruit the nucleosome remodeling and histone deacetylase/NuRD complex to telomeric regions of chromosomes to regulate chromatin remodeling as part of telomere maintenance. The protein is Zinc finger protein 827 (ZNF827) of Macaca fascicularis (Crab-eating macaque).